Consider the following 103-residue polypeptide: Nucleoid-associated protein Cgl0243/cg0297 (103 aa).

Belongs to the YbaB/EbfC family. As to quaternary structure, homodimer.

It is found in the cytoplasm. The protein resides in the nucleoid. Binds to DNA and alters its conformation. May be involved in regulation of gene expression, nucleoid organization and DNA protection. The sequence is that of Nucleoid-associated protein Cgl0243/cg0297 from Corynebacterium glutamicum (strain ATCC 13032 / DSM 20300 / JCM 1318 / BCRC 11384 / CCUG 27702 / LMG 3730 / NBRC 12168 / NCIMB 10025 / NRRL B-2784 / 534).